The primary structure comprises 774 residues: Transforming acidic coiled-coil-containing protein 1 (774 aa).

Position 2 is an N-acetylalanine (alanine 2). Positions 2–56 are interaction with LSM7 and SNRPG; the sequence is AFSPWQILSPVQWAKWTWSAVRGSGAGEDEAGGPEGDPEEEEDSQAETKSLSFSS. Phosphoserine is present on residues serine 4, serine 10, and serine 45. A disordered region spans residues 21 to 142; that stretch reads AVRGSGAGED…VKDVRGKAEH (122 aa). The segment covering 28-46 has biased composition (acidic residues); the sequence is GEDEAGGPEGDPEEEEDSQ. Residues 48-61 are compositionally biased toward polar residues; sequence ETKSLSFSSDSEGN. Positions 88 to 99 are enriched in basic and acidic residues; it reads PEAKPQESREAD. The segment covering 113 to 128 has biased composition (polar residues); sequence DTCSRSSENEAPQATV. Residues 131-142 are compositionally biased toward basic and acidic residues; sequence HPVKDVRGKAEH. Phosphoserine is present on residues serine 148 and serine 154. An interaction with TDRD7 region spans residues 153–255; that stretch reads FSIETRNCTD…PEMLMEGSPL (103 aa). The segment at 207-424 is interaction with YEATS4; the sequence is EAFTEASLKT…NNINTDDSGD (218 aa). The segment at 214–428 is disordered; it reads LKTGGPCPEP…TDDSGDPCKP (215 aa). SPAZ domains follow at residues 216–294 and 354–504; these read TGGP…TAGV and SKPV…TDEE. Phosphoserine; by AURKC is present on serine 228. Over residues 228–241 the composition is skewed to basic residues; that stretch reads SKLRKPKPVSLRKK. Phosphoserine occurs at positions 376 and 401. A compositionally biased stretch (polar residues) spans 397-407; that stretch reads ILQNSPPLSSK. A Bipartite nuclear localization signal motif is present at residues 452 to 468; the sequence is PKKAKSRLITSGCKVKK. Phosphoserine occurs at positions 480 and 560. A coiled-coil region spans residues 579 to 774; the sequence is IREEIITKEI…ELIAKLGKTD (196 aa). Residues 670-774 are interaction with CH-TOG; it reads VLEGFKKNEE…ELIAKLGKTD (105 aa).

Belongs to the TACC family. Interacts with CH-TOG and YEATS4. Interacts with the AURKA and AURKB and AURKC. Interacts with LSM7, TDRD7 and SNRPG. Interacts with GCN5L2 and PCAF. Interacts with the thyroid hormone receptors THRB and THRA, predominantly with isoform alpha-2. The interaction with THRA isoform alpha-1 and THRB is decreased in the presence of thyroid hormone T3. Interacts with RARA in the nucleus. Also interacts with other nuclear receptors, including ESR1, NR3C1, PPARG and RXRA, preferentially in the absence of their hormonal ligands.

The protein resides in the cytoplasm. It localises to the nucleus. It is found in the cytoskeleton. The protein localises to the microtubule organizing center. Its subcellular location is the centrosome. The protein resides in the midbody. Involved in transcription regulation induced by nuclear receptors, including in T3 thyroid hormone and all-trans retinoic acid pathways. Might promote the nuclear localization of the receptors. Likely involved in the processes that promote cell division prior to the formation of differentiated tissues. This Mus musculus (Mouse) protein is Transforming acidic coiled-coil-containing protein 1 (Tacc1).